Consider the following 479-residue polypeptide: Ribulose bisphosphate carboxylase large chain (479 aa).

Residues 1–2 (MS) constitute a propeptide that is removed on maturation. Asn-123 and Thr-173 together coordinate substrate. Lys-175 serves as the catalytic Proton acceptor. Lys-177 is a binding site for substrate. Residues Lys-201, Asp-203, and Glu-204 each coordinate Mg(2+). The residue at position 201 (Lys-201) is an N6-carboxylysine. A Phosphoserine modification is found at Ser-208. His-294 (proton acceptor) is an active-site residue. 2 residues coordinate substrate: Arg-295 and His-327. Phosphothreonine is present on Thr-330. Substrate is bound at residue Ser-379.

Belongs to the RuBisCO large chain family. Type I subfamily. Heterohexadecamer of 8 large chains and 8 small chains; disulfide-linked. The disulfide link is formed within the large subunit homodimers. Mg(2+) is required as a cofactor. In terms of processing, the disulfide bond which can form in the large chain dimeric partners within the hexadecamer appears to be associated with oxidative stress and protein turnover.

The protein resides in the plastid. Its subcellular location is the chloroplast. It catalyses the reaction 2 (2R)-3-phosphoglycerate + 2 H(+) = D-ribulose 1,5-bisphosphate + CO2 + H2O. The enzyme catalyses D-ribulose 1,5-bisphosphate + O2 = 2-phosphoglycolate + (2R)-3-phosphoglycerate + 2 H(+). In terms of biological role, ruBisCO catalyzes two reactions: the carboxylation of D-ribulose 1,5-bisphosphate, the primary event in carbon dioxide fixation, as well as the oxidative fragmentation of the pentose substrate in the photorespiration process. Both reactions occur simultaneously and in competition at the same active site. This is Ribulose bisphosphate carboxylase large chain from Barbarea verna (Land cress).